The primary structure comprises 526 residues: Alpha-ketoglutaric semialdehyde dehydrogenase (526 aa).

Residues 159 to 160 (SN), 185 to 188 (KAHS), and 240 to 241 (GS) each bind NADP(+). Residue E264 is the Proton acceptor of the active site. The Nucleophile role is filled by C301. E393 contributes to the NADP(+) binding site.

The protein belongs to the aldehyde dehydrogenase family.

It catalyses the reaction 2,5-dioxopentanoate + NADP(+) + H2O = 2-oxoglutarate + NADPH + 2 H(+). Its pathway is carbohydrate acid metabolism; D-glucarate degradation. Its function is as follows. Catalyzes the NAD(P)(+)-dependent oxidation of alpha-ketoglutaric semialdehyde (alphaKGSA) to alpha-ketoglutarate in the D-glutarate degradation pathway. This is Alpha-ketoglutaric semialdehyde dehydrogenase from Acinetobacter baylyi (strain ATCC 33305 / BD413 / ADP1).